A 230-amino-acid chain; its full sequence is Isoprenyl transferase (230 aa).

The active site involves aspartate 14. Aspartate 14 is a binding site for Mg(2+). Substrate-binding positions include 15–18, tryptophan 19, arginine 27, histidine 31, and 59–61; these read GNGR and STE. Asparagine 62 acts as the Proton acceptor in catalysis. Substrate contacts are provided by residues tryptophan 63, arginine 65, arginine 175, and 181-183; that span reads RIS. Glutamate 194 provides a ligand contact to Mg(2+).

Belongs to the UPP synthase family. As to quaternary structure, homodimer. Mg(2+) is required as a cofactor.

In terms of biological role, catalyzes the condensation of isopentenyl diphosphate (IPP) with allylic pyrophosphates generating different type of terpenoids. The chain is Isoprenyl transferase from Fusobacterium nucleatum subsp. nucleatum (strain ATCC 25586 / DSM 15643 / BCRC 10681 / CIP 101130 / JCM 8532 / KCTC 2640 / LMG 13131 / VPI 4355).